The chain runs to 558 residues: 2-isopropylmalate synthase (558 aa).

Positions 30–303 (PIWCSVDLRD…DPKLDCSDIE (274 aa)) constitute a Pyruvate carboxyltransferase domain. Mg(2+) contacts are provided by Asp39, His242, His244, and Asn278. The regulatory domain stretch occupies residues 437–558 (QPGARIKFVD…ANRVLDVVGK (122 aa)).

This sequence belongs to the alpha-IPM synthase/homocitrate synthase family. LeuA type 2 subfamily. As to quaternary structure, homodimer. The cofactor is Mg(2+).

The protein localises to the cytoplasm. It carries out the reaction 3-methyl-2-oxobutanoate + acetyl-CoA + H2O = (2S)-2-isopropylmalate + CoA + H(+). The protein operates within amino-acid biosynthesis; L-leucine biosynthesis; L-leucine from 3-methyl-2-oxobutanoate: step 1/4. Functionally, catalyzes the condensation of the acetyl group of acetyl-CoA with 3-methyl-2-oxobutanoate (2-ketoisovalerate) to form 3-carboxy-3-hydroxy-4-methylpentanoate (2-isopropylmalate). The chain is 2-isopropylmalate synthase from Rhizobium meliloti (strain 1021) (Ensifer meliloti).